Reading from the N-terminus, the 375-residue chain is Prophage integrase IntE (375 aa).

Positions Ile82 to Gln167 constitute a Core-binding (CB) domain. Residues Ile189 to Leu375 form the Tyr recombinase domain. Catalysis depends on residues Arg226, Lys249, His330, Arg333, and His353. Residues Leu350 to Leu375 form a disordered region. Residue Tyr362 is the O-(3'-phospho-DNA)-tyrosine intermediate of the active site.

The protein belongs to the 'phage' integrase family.

Functionally, integrase from the cryptic lambdoid prophage e14. Integrase is necessary for integration of the phage into the host genome by site-specific recombination. In conjunction with excisionase, integrase is also necessary for excision of the prophage from the host genome. This Escherichia coli (strain K12) protein is Prophage integrase IntE (intE).